The chain runs to 465 residues: MKHIVKHIHFVGIGGAGMSGIAEVLVNLGYEVSGSDLSRNAVTDRLAALGARIAIGHDAANIEGANAVVVSTAVRSDNPEVLAARHQRVPIVQRAVMLAELMRLKQGIAIAGTHGKTTTTSLVASVLAAGGLDPTFVIGGRLISAGANARLGTGDFIVAEADESDASFLNLYPVIEVITNIDADHMDTYGHDFARLKQAFIEFTQRLPFYGSAVVCVDDPNVRQIIPFISKPVVRYGLSADAQVRAENIDARDGRMHFTVIREGRSPLAVVLNLPGLHNVQNALAAIAIATDLGVSDDAIQLALAEFNGVGRRFQRYGEVPSADGGQYTLIDDYGHHPVEMAATIAAARGAFPGRRLVLAFQPHRYTRTRDCFDDFVNVLSTVDALVLTEVYAAGEAAIATANGDALSRALRTVGKVDPVFVATVDDVPDALAKVARNGDVVITMGAGSIGGVPAKIVQNTQQKG.

112-118 contributes to the ATP binding site; that stretch reads GTHGKTT.

It belongs to the MurCDEF family.

The protein localises to the cytoplasm. It carries out the reaction UDP-N-acetyl-alpha-D-muramate + L-alanine + ATP = UDP-N-acetyl-alpha-D-muramoyl-L-alanine + ADP + phosphate + H(+). The protein operates within cell wall biogenesis; peptidoglycan biosynthesis. Its function is as follows. Cell wall formation. The sequence is that of UDP-N-acetylmuramate--L-alanine ligase from Burkholderia vietnamiensis (strain G4 / LMG 22486) (Burkholderia cepacia (strain R1808)).